A 486-amino-acid chain; its full sequence is ATP synthase subunit beta (486 aa).

Residue 164–171 (GGAGVGKT) coordinates ATP.

The protein belongs to the ATPase alpha/beta chains family. In terms of assembly, F-type ATPases have 2 components, CF(1) - the catalytic core - and CF(0) - the membrane proton channel. CF(1) has five subunits: alpha(3), beta(3), gamma(1), delta(1), epsilon(1). CF(0) has four main subunits: a(1), b(1), b'(1) and c(9-12).

The protein localises to the cellular thylakoid membrane. It catalyses the reaction ATP + H2O + 4 H(+)(in) = ADP + phosphate + 5 H(+)(out). In terms of biological role, produces ATP from ADP in the presence of a proton gradient across the membrane. The catalytic sites are hosted primarily by the beta subunits. In Prochlorococcus marinus (strain MIT 9515), this protein is ATP synthase subunit beta.